The primary structure comprises 95 residues: RING finger protein Z (95 aa).

The N-myristoyl glycine; by host moiety is linked to residue Gly2. The RING-type; atypical zinc finger occupies 38-74 (CKSCWFANRGLIACSDHYLCLNCLTRLRSQSQFCGIC). A PTAP/PSAP motif motif is present at residues 88 to 91 (PSAP).

It belongs to the arenaviridae Z protein family. Interacts with protein NP; this interaction probably directs the encapsidated genome to budding sites. Interacts (via RING domain) with polymerase L; this interaction inhibits viral transcription and replication, Z partially blocks the product exit tunnel for the releasing nascent RNA product. Interacts with the glycoprotein complex; this interaction plays a role in virion budding. Interacts with host eIF4E; this interaction results in eIF4E reduced affinity for its substrate, the 5'-m7 G cap structure. Interacts (via late-budding domain) with host TSG101; this interaction is essential for budding and release of viral particles. Interacts with host RPLP0; this interaction may serve to load ribosome-like particles inside the virion. Interacts with host PML; this interaction induces PML bodies redistribution in the cytoplasm upon viral infection. Myristoylation is required for the role of RING finger protein Z in assembly and budding.

It localises to the virion. Its subcellular location is the host cytoplasm. The protein resides in the host perinuclear region. The protein localises to the host cell membrane. Functionally, plays a crucial role in virion assembly and budding. Expressed late in the virus life cycle, it acts as an inhibitor of viral transcription and RNA synthesis by interacting with the viral polymerase L. Presumably recruits the NP encapsidated genome to cellular membranes at budding sites via direct interaction with NP. Plays critical roles in the final steps of viral release by interacting with host TSG101, a member of the vacuolar protein-sorting pathway and using other cellular host proteins involved in vesicle formation pathway. The budding of the virus progeny occurs after association of protein Z with the viral glycoprotein complex SSP-GP1-GP2 at the cell periphery, step that requires myristoylation of protein Z. Also selectively represses protein production by associating with host eIF4E. In cell-based minigenome assay, has an inhibitory effect on the ribonucleoprotein machinery (vRNP), which is responsible for the replication and transcription of the viral genome. The chain is RING finger protein Z from Pirital mammarenavirus (isolate Rat/Venezuela/VAV-488/1995) (PIRV).